The primary structure comprises 85 residues: Three-finger toxin MALT0044C (85 aa).

Residues 1 to 21 (MKTLLLTLVVVTIVCLDLGNT) form the signal peptide. 4 cysteine pairs are disulfide-bonded: C24-C45, C38-C63, C67-C78, and C79-C84.

Belongs to the three-finger toxin family. Short-chain subfamily. As to expression, expressed by the venom gland.

It is found in the secreted. This Micrurus altirostris (Uruguayan coral snake) protein is Three-finger toxin MALT0044C.